Here is an 819-residue protein sequence, read N- to C-terminus: Advillin (819 aa).

Residues 1–731 are core; it reads MSLSSAFRAV…YEQLKNELGD (731 aa). Residues 24–73 form a Gelsolin-like 1 repeat; that stretch reads MELALVPLSAHGNFYEGDCYIVLSTRRVGSLLSQNIHFWIGKDSSQDEQS. Position 85 is a phosphotyrosine (Tyr-85). Residues 109–116 and 135–143 each bind a 1,2-diacyl-sn-glycero-3-phospho-(1D-myo-inositol-4,5-bisphosphate); these read KQGIIYKK and RLLHVKGKR. Gelsolin-like repeat units follow at residues 145-185, 262-306, 403-454, 525-565, and 628-669; these read IQAT…GERL, LSVT…VEKQ, ENLE…DELA, TKAV…DERA, and FLVT…TEKK. Positions 628 to 819 are required for interaction with F-actin; the sequence is FLVTEVTDFT…LQLKKERGLF (192 aa). The interval 732 to 819 is headpiece; that stretch reads ATAIVRITAD…LQLKKERGLF (88 aa). Phosphotyrosine is present on residues Tyr-748 and Tyr-758. In terms of domain architecture, HP spans 753-819; sequence DGEPKYYPVE…LQLKKERGLF (67 aa).

The protein belongs to the villin/gelsolin family. As to quaternary structure, associates (via C-terminus) with actin. Interacts with F-actin. Interacts with SCARF1; the interaction occurs in embryonic dorsal root ganglions at 18 dpc and induces neurite-like outgrowth. Interacts with PLCE1. Interacts with ACTR2 and ACTR3; associates with the ARP2/3 complex. In terms of tissue distribution, most highly expressed in the endometrium of the uterus, the intestinal villi and the testes. Weaker expression also detected in the brain, dorsal root ganglions and on the surface of the tongue.

The protein localises to the cytoplasm. It localises to the cytoskeleton. It is found in the cell projection. The protein resides in the lamellipodium. Its subcellular location is the cell junction. The protein localises to the focal adhesion. It localises to the neuron projection. It is found in the axon. Ca(2+)-regulated actin-binding protein which plays an important role in actin bundling. May have a unique function in the morphogenesis of neuronal cells which form ganglia. Required for SREC1-mediated regulation of neurite-like outgrowth. Plays a role in regenerative sensory axon outgrowth and remodeling processes after peripheral injury in neonates. Involved in the formation of long fine actin-containing filopodia-like structures in fibroblast. Plays a role in ciliogenesis. In podocytes, controls lamellipodia formation through the regulation of EGF-induced diacylglycerol generation by PLCE1 and ARP2/3 complex assembly. In Mus musculus (Mouse), this protein is Advillin.